Reading from the N-terminus, the 166-residue chain is Putative peroxisomal peroxiredoxin (166 aa).

The Thioredoxin domain occupies 5-166; it reads FPEDVKFLYI…SGVDAVLAAL (162 aa). Cysteine 56 acts as the Cysteine sulfenic acid (-SOH) intermediate in catalysis.

The protein belongs to the peroxiredoxin family. Prx5 subfamily. Homodimer; disulfide-linked, upon oxidation.

The enzyme catalyses a hydroperoxide + [protein]-dithiol = [protein]-disulfide + an alcohol + H2O. Functionally, thiol-specific peroxidase that catalyzes the reduction of hydrogen peroxide and organic hydroperoxides to water and alcohols, respectively. Plays a role in cell protection against oxidative stress by detoxifying peroxides and as sensor of hydrogen peroxide-mediated signaling events. The polypeptide is Putative peroxisomal peroxiredoxin (Lipomyces kononenkoae (Yeast)).